We begin with the raw amino-acid sequence, 296 residues long: Meiotically up-regulated gene 2 protein (296 aa).

Belongs to the UPF0612 family.

The protein localises to the cytoplasm. The protein resides in the nucleus. Functionally, has a role in meiosis. This Schizosaccharomyces pombe (strain 972 / ATCC 24843) (Fission yeast) protein is Meiotically up-regulated gene 2 protein (mug2).